Consider the following 130-residue polypeptide: Capsid protein (130 aa).

Residues 31-104 are viral RNA-binding; the sequence is EWLSNNSRSQ…FAATDDVTVI (74 aa).

Belongs to the Leviviricetes capsid protein family. As to quaternary structure, homodimer. The capsid proteins form dimers that assemble by group of 5. Twelve such pentamers are linked together with free dimers. The homodimers binds to the viral RNA via an operator hairpin, but also to many other RNA sequences in the viral genome; this interaction probably shifts the virus from the replicative to the assembly phase and ensures specific encapsidation of the viral genome.

The protein localises to the virion. Functionally, capsid protein self-assembles to form an icosahedral capsid with a T=3 symmetry, about 26 nm in diameter, and consisting of 89 capsid proteins dimers (178 capsid proteins). Involved in viral genome encapsidation through the interaction between a capsid protein dimer and the multiple packaging signals present in the RNA genome. The capsid also contains 1 copy of the A2 maturation protein. In terms of biological role, acts as a translational repressor of viral replicase synthesis late in infection. This latter function is the result of capsid protein interaction with an RNA hairpin which contains the replicase ribosome-binding site. This chain is Capsid protein, found in Escherichia coli (Bacteriophage JP34).